Consider the following 311-residue polypeptide: Arginine/serine-rich protein 1 (311 aa).

Residues 1-125 form a disordered region; sequence MSTYVNDMWP…RSRSRSRGRS (125 aa). A Phosphoserine modification is found at Ser12. A compositionally biased stretch (low complexity) spans 20 to 31; the sequence is STSRSGGSSRLS. Positions 32 to 123 are enriched in basic residues; sequence SRSRSRSFSR…RSRSRSRSRG (92 aa). 2 positions are modified to phosphoserine: Ser109 and Ser111. Residue Arg135 is modified to Omega-N-methylarginine.

The protein belongs to the RSRP family. Post-translationally, phosphorylated. Phosphorylation at Ser-109 and Ser-111 mediates the interaction with spliceosome proteins.

It is found in the nucleus. Probably acts as a spliceosomal factor that contributes to spliceosome assembly and regulates the isoform switching of proteins such as PARP6. The protein is Arginine/serine-rich protein 1 (RSRP1) of Pongo abelii (Sumatran orangutan).